A 159-amino-acid chain; its full sequence is RNA pyrophosphohydrolase (159 aa).

Residues 6–149 (GFRPNVGIIL…KREVYRRALK (144 aa)) form the Nudix hydrolase domain. Positions 38–59 (GGINPDETPEDALYRELNEEVG) match the Nudix box motif.

Belongs to the Nudix hydrolase family. RppH subfamily. A divalent metal cation serves as cofactor.

In terms of biological role, accelerates the degradation of transcripts by removing pyrophosphate from the 5'-end of triphosphorylated RNA, leading to a more labile monophosphorylated state that can stimulate subsequent ribonuclease cleavage. The chain is RNA pyrophosphohydrolase from Pseudomonas fluorescens (strain ATCC BAA-477 / NRRL B-23932 / Pf-5).